The following is an 85-amino-acid chain: Alpha-insect toxin Bot14 (85 aa).

An N-terminal signal peptide occupies residues methionine 1–glutamine 18. The region spanning arginine 20–histidine 84 is the LCN-type CS-alpha/beta domain. Disulfide bonds link cysteine 30/cysteine 83, cysteine 34/cysteine 55, cysteine 41/cysteine 65, and cysteine 45/cysteine 67.

This sequence belongs to the long (4 C-C) scorpion toxin superfamily. Sodium channel inhibitor family. Alpha subfamily. As to expression, expressed by the venom gland.

The protein resides in the secreted. Alpha toxins bind voltage-independently at site-3 of sodium channels (Nav) and inhibit the inactivation of the activated channels, thereby blocking neuronal transmission. This toxin is active only on insects. The protein is Alpha-insect toxin Bot14 of Buthus occitanus tunetanus (Common European scorpion).